Here is a 355-residue protein sequence, read N- to C-terminus: Tetraacyldisaccharide 4'-kinase (355 aa).

ATP is bound at residue 48–55 (SVGGTGKT).

Belongs to the LpxK family.

It catalyses the reaction a lipid A disaccharide + ATP = a lipid IVA + ADP + H(+). It participates in glycolipid biosynthesis; lipid IV(A) biosynthesis; lipid IV(A) from (3R)-3-hydroxytetradecanoyl-[acyl-carrier-protein] and UDP-N-acetyl-alpha-D-glucosamine: step 6/6. Its function is as follows. Transfers the gamma-phosphate of ATP to the 4'-position of a tetraacyldisaccharide 1-phosphate intermediate (termed DS-1-P) to form tetraacyldisaccharide 1,4'-bis-phosphate (lipid IVA). The protein is Tetraacyldisaccharide 4'-kinase of Pelodictyon phaeoclathratiforme (strain DSM 5477 / BU-1).